We begin with the raw amino-acid sequence, 493 residues long: Amphoterin-induced protein 1 (493 aa).

The N-terminal stretch at 1 to 27 (MQPQRDLRGLWLLLLSLFLLLFEVARA) is a signal peptide. The LRRNT domain occupies 28–61 (GRPVVSCPANCLCASNILSCSKQQLPNVPQSLPG). The Extracellular segment spans residues 28–372 (GRPVVSCPAN…LHGHHDTLNT (345 aa)). Intrachain disulfides connect cysteine 34-cysteine 40 and cysteine 38-cysteine 47. 6 LRR repeats span residues 62 to 83 (YTAL…WTPT), 87 to 108 (NLHS…AFVP), 111 to 132 (NLRY…LFSG), 135 to 156 (ALEV…AFED), 159 to 179 (QLQK…ELIK), and 186 to 206 (KLTL…TDLQ). Asparagine 72 carries an N-linked (GlcNAc...) asparagine glycan. Residues 221 to 272 (NPLECDCKLYQLFSHWQYRQLSSVMDFQEDLYCVHSKKLHNVFSLDFFNCSE) enclose the LRRCT domain. Cystine bridges form between cysteine 225–cysteine 253, cysteine 227–cysteine 270, and cysteine 290–cysteine 341. Asparagine 269, asparagine 315, asparagine 349, and asparagine 360 each carry an N-linked (GlcNAc...) asparagine glycan. The region spanning 269 to 353 (NCSEYKESAW…MGETFNETLS (85 aa)) is the Ig-like C2-type domain. The chain crosses the membrane as a helical span at residues 373–393 (AYTTLVGCILSVVLVLIYLYL). The Cytoplasmic portion of the chain corresponds to 394–493 (TPCRCWCRGV…SVFSDTPIVV (100 aa)). The segment at 405–493 (KPSSHQGDSL…SVFSDTPIVV (89 aa)) is disordered. Residues 408–424 (SHQGDSLSSSMLSTTPN) are compositionally biased toward polar residues. Basic and acidic residues predominate over residues 431–442 (GDKDDGFDRRVA). Serine 477 and serine 481 each carry phosphoserine.

The protein belongs to the immunoglobulin superfamily. AMIGO family. Homodimer, and heterodimer with AMIGO2 and AMIGO3. Interacts with KCNB1.

It is found in the cell membrane. It localises to the perikaryon. The protein resides in the cell projection. Its subcellular location is the dendrite. The protein localises to the axon. Its function is as follows. Promotes growth and fasciculation of neurites from cultured hippocampal neurons. May be involved in fasciculation as well as myelination of developing neural axons. May have a role in regeneration as well as neural plasticity in the adult nervous system. May mediate homophilic as well as heterophilic cell-cell interaction and contribute to signal transduction through its intracellular domain. Assembled with KCNB1 modulates the gating characteristics of the delayed rectifier voltage-dependent potassium channel KCNB1. This chain is Amphoterin-induced protein 1, found in Rattus norvegicus (Rat).